The sequence spans 258 residues: uncharacterized protein (258 aa).

3 Solcar repeats span residues 9–78, 81–160, and 165–246; these read KPIL…AKAR, PGVR…FKKK, and DHVF…VKSH. The next 6 helical transmembrane spans lie at 11-31, 53-73, 87-107, 139-159, 171-191, and 218-239; these read ILVG…LSTI, GLSS…FVYE, LVSA…AEVV, MCGR…QFKK, PKGA…LDVI, and FEKG…YLGT.

Belongs to the mitochondrial carrier (TC 2.A.29) family.

It localises to the mitochondrion inner membrane. This is an uncharacterized protein from Schizosaccharomyces pombe (strain 972 / ATCC 24843) (Fission yeast).